A 178-amino-acid chain; its full sequence is Large ribosomal subunit protein uL6 (178 aa).

Belongs to the universal ribosomal protein uL6 family. In terms of assembly, part of the 50S ribosomal subunit.

This protein binds to the 23S rRNA, and is important in its secondary structure. It is located near the subunit interface in the base of the L7/L12 stalk, and near the tRNA binding site of the peptidyltransferase center. In Buchnera aphidicola subsp. Schizaphis graminum (strain Sg), this protein is Large ribosomal subunit protein uL6.